We begin with the raw amino-acid sequence, 443 residues long: MFLAQEIIRKKRNAEVLSTEEIQFFVNGITNNTVSEGQIAAFGMAVYFNDMNMDERIALTTAMRDSGTVLDWKSLDLNGPIIDKHSTGGVGDVISLMLGPMAAACGGYVPMISGRGLGHTGGTLDKFDAIPGYNTEPDSALFRKVVKEAGVAIIGQTGDLVPADKRFYSIRDNTATVESISLITASILSKKLAAGLDALAMDVKVGTGAFMPTYELSEELARSITAVANGAGTKTTALLTDMNQVLASCAGNAVEVKEAVDFMTGAYRNPRLYEVTMGLCAEMLVLGGIASNEAEARVKLNAVLDNGKAAEIFGRMVSGLGGPADFVENYSKYLPDSQIIRPVYADRAGFASAMDTRELGLAVVTLGGGRRKPGDVLDYSVGLSKVCALGDEINADKPIAFIHAQSEGAFAEAEAAVKKAIHIGDTKPDKTPEIYRYIRESDL.

This sequence belongs to the thymidine/pyrimidine-nucleoside phosphorylase family. In terms of assembly, homodimer.

The enzyme catalyses thymidine + phosphate = 2-deoxy-alpha-D-ribose 1-phosphate + thymine. Its pathway is pyrimidine metabolism; dTMP biosynthesis via salvage pathway; dTMP from thymine: step 1/2. Functionally, the enzymes which catalyze the reversible phosphorolysis of pyrimidine nucleosides are involved in the degradation of these compounds and in their utilization as carbon and energy sources, or in the rescue of pyrimidine bases for nucleotide synthesis. This chain is Thymidine phosphorylase, found in Shewanella halifaxensis (strain HAW-EB4).